A 977-amino-acid polypeptide reads, in one-letter code: Zinc finger CCCH domain-containing protein 7B (977 aa).

TPR repeat units follow at residues 1 to 27, 36 to 69, and 82 to 115; these read MERQ…KQEE, VQNL…ADYA, and CKLH…DSES. Ser217 is modified (phosphoserine). Positions 248-256 match the LD motif; interaction with NSP3 motif; the sequence is STDSLDDFS. Phosphoserine occurs at positions 364 and 367. The tract at residues 365–403 is disordered; it reads FGSTRGSLDKPDSFMEETNSQDHRPPSGAQKPAPSPEPC. 3 C3H1-type zinc fingers span residues 484–508, 616–638, and 754–782; these read LCKD…HQEE, VCRH…HSFI, and PQQY…HSPE. Residues 842–866 form a C2H2-type zinc finger; the sequence is YHCWLCGKNSNSKKQWQQHIQSEKH. The segment at 886–914 adopts a C3H1-type 4 zinc-finger fold; sequence MGEFRLCDRLQKGKACPDGDKCRCAHGQE.

As to quaternary structure, (Microbial infection) Interacts (via LD motif) with rotavirus A NSP3 (via the coiled-coil region).

Its subcellular location is the nucleus. In terms of biological role, may be a specific regulator of miRNA biogenesis. Binds to microRNAs MIR7-1, MIR16-2 and MIR29A hairpins recognizing the 'ATA(A/T)' motif in the apical loop. The chain is Zinc finger CCCH domain-containing protein 7B (ZC3H7B) from Homo sapiens (Human).